The primary structure comprises 113 residues: Protein FMC1 homolog (113 aa).

Residues 94–113 form a disordered region; sequence SAGLVGLQLPHQPGGKGWEP.

Belongs to the FMC1 family. As to quaternary structure, interacts with ATPAF2.

Its subcellular location is the mitochondrion. Plays a role in the assembly/stability of the mitochondrial membrane ATP synthase (F(1)F(0) ATP synthase or Complex V). The sequence is that of Protein FMC1 homolog from Rattus norvegicus (Rat).